Consider the following 64-residue polypeptide: Large ribosomal subunit protein bL35 (64 aa).

2 stretches are compositionally biased toward basic residues: residues 1–15 (MPKA…KRFR) and 23–33 (VRQKANRRHLL). The interval 1–47 (MPKAKTHSGASKRFRTTGSGKIVRQKANRRHLLEHKPTSRTRRLDGR) is disordered. A compositionally biased stretch (basic and acidic residues) spans 34–46 (EHKPTSRTRRLDG).

The protein belongs to the bacterial ribosomal protein bL35 family.

The polypeptide is Large ribosomal subunit protein bL35 (Mycobacteroides abscessus (strain ATCC 19977 / DSM 44196 / CCUG 20993 / CIP 104536 / JCM 13569 / NCTC 13031 / TMC 1543 / L948) (Mycobacterium abscessus)).